The primary structure comprises 558 residues: Atlastin-1 (558 aa).

Positions 1-28 (MAKNRRDRNSWGGFSEKTYEWSSEEEEP) are disordered. The interval 1–34 (MAKNRRDRNSWGGFSEKTYEWSSEEEEPVKKAGP) is N-terminal hypervariable region (HVR). The Cytoplasmic portion of the chain corresponds to 1–449 (MAKNRRDRNS…NIFHAARTPA (449 aa)). Phosphoserine is present on residues S10, S22, and S23. The GB1/RHD3-type G domain maps to 64-309 (DKEVVAVSVA…LIPWLLSPES (246 aa)). GDP-binding residues include R77, K78, G79, K80, S81, F82, Q148, R217, D218, V276, and N279. Residues R77, K78, G79, K80, S81, and F82 each contribute to the GTP site. Mg(2+) is bound at residue S81. R217, D218, and V276 together coordinate GTP. A 3HB (three-helix bundle) domain region spans residues 347–438 (MLQATAEANN…YIQYIKHNDS (92 aa)). K395 carries the post-translational modification N6-acetyllysine. A coiled-coil region spans residues 418–439 (LQQLETEIDELYIQYIKHNDSK). Residues 439–447 (KNIFHAART) are linker. Residues 450 to 470 (TLFVVIFITYVIAGVTGFIGL) traverse the membrane as a helical segment. Residue D471 is a topological domain, lumenal. A helical membrane pass occupies residues 472 to 492 (IIASLCNMIMGLTLITLCTWA). At 493–558 (YIRYSGEYRE…STEQSEKKKM (66 aa)) the chain is on the cytoplasmic side. The segment at 521-558 (NEALYKLYSAAATHRHLYHQAFPAPKSESTEQSEKKKM) is autoinhibitory domain.

The protein belongs to the TRAFAC class dynamin-like GTPase superfamily. GB1/RHD3 GTPase family. GB1 subfamily. As to quaternary structure, monomeric and homodimeric. The homodimer, transiently formed by two molecules on opposing membranes, is the active form mediating ER membrane fusion. Interacts with REEP1, REEP5, RTN3 and RTN4 (via the transmembrane region); these proteins are involved in endoplasmic reticulum tubular network organization. Interacts with ZFYVE27; both proteins are involved in endoplasmic reticulum tubular network organization. Interacts with ARL6IP1; both proteins are involved in endoplasmic reticulum tubular network organization. Interacts with SPAST; the interaction is direct, could recruit SPAST to Golgi membranes. Interacts (via N-terminal region) with MAP4K4 (via CNH regulatory domain). May interact with TMED2. Interacts with CPT1C. In terms of processing, phosphorylated. Phosphorylation, by different kinases, of the N-terminal hypervariable region (HVR) regulates the ATL1-mediated membrane tethering step.

The protein resides in the endoplasmic reticulum membrane. It localises to the golgi apparatus membrane. It is found in the cell projection. The protein localises to the axon. It catalyses the reaction GTP + H2O = GDP + phosphate + H(+). Atlastin-1 (ATL1) is a membrane-anchored GTPase that mediates the GTP-dependent fusion of endoplasmic reticulum (ER) membranes, maintaining the continuous ER network. It facilitates the formation of three-way junctions where ER tubules intersect. Two atlastin-1 on neighboring ER tubules bind GTP and form loose homodimers through the GB1/RHD3-type G domains and 3HB regions. Upon GTP hydrolysis, the 3HB regions tighten, pulling the membranes together to drive their fusion. After fusion, the homodimer disassembles upon release of inorganic phosphate (Pi). Subsequently, GDP dissociates, resetting the monomers to a conformation ready for a new fusion cycle. May also regulate more or less directly Golgi biogenesis. Indirectly regulates axonal development. The chain is Atlastin-1 from Bos taurus (Bovine).